The chain runs to 510 residues: MTSLIAQWLHITQDLNSALTRQARFDTLLTTIRDVLNCDSSALLLFEDQHFKPLAINGLAKEVLGRRFSIEQHPRLEAIARAGDIVRFPSESTLPDPYDGLITNHQGKLHVHSCIGLPLLIDDQLIGAITIDALDPNQFDQLKNQELRFISALAAGGLHTALLLEQLETQASLPRESYAEKRTLSNEIIGNSQGMRTLQEQIDAVANTELSVLVMGETGVGKELVANAIHHRSDRASNNLVYLNCAALPESVAESELFGHIKGAFTGAISHRKGKFEQADGGTLFLDEVGELSLELQAKLLRALQYGDIQRVGDDRHIRVNTRIVAATNRVLHEEVKAGRFRADLYHRLSVFPLHVPPLREREEDVILLAGFFAEQVRGKLGLHSVRLSPSLVAELREYHWPGNVRELEHVIKRAAVLAKARTPQMDIELISQDFDIKTPTSPMMPTVAASQAQHEIHVDIGLKQATDAFQKQLILRALESNQGNWAATARQLELDSGNLHRLAKRLGIK.

The region spanning 188–417 is the Sigma-54 factor interaction domain; the sequence is IIGNSQGMRT…LEHVIKRAAV (230 aa). ATP contacts are provided by residues 216–223 and 279–288; these read GETGVGKE and ADGGTLFLDE. The H-T-H motif DNA-binding region spans 486 to 505; it reads WAATARQLELDSGNLHRLAK.

Its pathway is nitrogen metabolism; nitric oxide reduction. In terms of biological role, required for the expression of anaerobic nitric oxide (NO) reductase, acts as a transcriptional activator for at least the norVW operon. Activation also requires sigma-54. The sequence is that of Anaerobic nitric oxide reductase transcription regulator NorR from Vibrio vulnificus (strain YJ016).